A 322-amino-acid chain; its full sequence is Pantothenate kinase (322 aa).

An ATP-binding site is contributed by 101 to 108 (GSVAVGKS).

The protein belongs to the prokaryotic pantothenate kinase family.

Its subcellular location is the cytoplasm. It carries out the reaction (R)-pantothenate + ATP = (R)-4'-phosphopantothenate + ADP + H(+). Its pathway is cofactor biosynthesis; coenzyme A biosynthesis; CoA from (R)-pantothenate: step 1/5. This Psychromonas ingrahamii (strain DSM 17664 / CCUG 51855 / 37) protein is Pantothenate kinase.